Consider the following 390-residue polypeptide: 3-ketoacyl-CoA thiolase (390 aa).

C95 serves as the catalytic Acyl-thioester intermediate. Residues H346 and C376 each act as proton acceptor in the active site.

Belongs to the thiolase-like superfamily. Thiolase family. As to quaternary structure, heterotetramer of two alpha chains (FadB) and two beta chains (FadA).

It localises to the cytoplasm. The catalysed reaction is an acyl-CoA + acetyl-CoA = a 3-oxoacyl-CoA + CoA. The protein operates within lipid metabolism; fatty acid beta-oxidation. Catalyzes the final step of fatty acid oxidation in which acetyl-CoA is released and the CoA ester of a fatty acid two carbons shorter is formed. This is 3-ketoacyl-CoA thiolase from Psychrobacter cryohalolentis (strain ATCC BAA-1226 / DSM 17306 / VKM B-2378 / K5).